The following is a 298-amino-acid chain: UDP-N-acetylenolpyruvoylglucosamine reductase (298 aa).

The FAD-binding PCMH-type domain maps to 26 to 191; that stretch reads KTGGAADVFV…LDATFSLALE (166 aa). The active site involves Arg-170. Ser-220 serves as the catalytic Proton donor. Residue Glu-290 is part of the active site.

Belongs to the MurB family. It depends on FAD as a cofactor.

The protein resides in the cytoplasm. It catalyses the reaction UDP-N-acetyl-alpha-D-muramate + NADP(+) = UDP-N-acetyl-3-O-(1-carboxyvinyl)-alpha-D-glucosamine + NADPH + H(+). The protein operates within cell wall biogenesis; peptidoglycan biosynthesis. Functionally, cell wall formation. The chain is UDP-N-acetylenolpyruvoylglucosamine reductase from Listeria monocytogenes serotype 4b (strain CLIP80459).